Consider the following 896-residue polypeptide: Translation initiation factor IF-2 (896 aa).

Disordered regions lie at residues 32–99 and 117–304; these read LAQA…TALP and EITS…KQAE. Positions 35-48 are enriched in polar residues; sequence AGSSDTKNSPASKA. Residues 153 to 169 are compositionally biased toward basic and acidic residues; the sequence is TPERIEETPIIRTRTEP. Positions 203 to 214 are enriched in low complexity; the sequence is AASTEETTQQQP. Residues 215–227 show a composition bias toward polar residues; the sequence is RQNDAASHNNKQQ. The span at 228–241 shows a compositional bias: low complexity; the sequence is PSGTSSRPASSAPS. The segment covering 256–280 has biased composition (basic and acidic residues); sequence RGSERDRSKRSDESVKAFTGRDRYG. The region spanning 401–570 is the tr-type G domain; it reads IRSPIVAFMG…ALQAEVLELK (170 aa). The interval 410–417 is G1; the sequence is GHVDHGKT. Residue 410–417 coordinates GTP; sequence GHVDHGKT. The interval 435–439 is G2; that stretch reads AITQH. A G3 region spans residues 456–459; it reads DTPG. GTP contacts are provided by residues 456 to 460 and 510 to 513; these read DTPGH and NKCD. The G4 stretch occupies residues 510–513; sequence NKCD. Residues 546-548 are G5; that stretch reads SAK.

The protein belongs to the TRAFAC class translation factor GTPase superfamily. Classic translation factor GTPase family. IF-2 subfamily.

It localises to the cytoplasm. One of the essential components for the initiation of protein synthesis. Protects formylmethionyl-tRNA from spontaneous hydrolysis and promotes its binding to the 30S ribosomal subunits. Also involved in the hydrolysis of GTP during the formation of the 70S ribosomal complex. This chain is Translation initiation factor IF-2, found in Chlamydia trachomatis serovar L2 (strain ATCC VR-902B / DSM 19102 / 434/Bu).